A 394-amino-acid polypeptide reads, in one-letter code: NAD(P)H-quinone oxidoreductase subunit H (394 aa).

This sequence belongs to the complex I 49 kDa subunit family. As to quaternary structure, NDH-1 can be composed of about 15 different subunits; different subcomplexes with different compositions have been identified which probably have different functions.

The protein localises to the cellular thylakoid membrane. The enzyme catalyses a plastoquinone + NADH + (n+1) H(+)(in) = a plastoquinol + NAD(+) + n H(+)(out). It carries out the reaction a plastoquinone + NADPH + (n+1) H(+)(in) = a plastoquinol + NADP(+) + n H(+)(out). Functionally, NDH-1 shuttles electrons from an unknown electron donor, via FMN and iron-sulfur (Fe-S) centers, to quinones in the respiratory and/or the photosynthetic chain. The immediate electron acceptor for the enzyme in this species is believed to be plastoquinone. Couples the redox reaction to proton translocation, and thus conserves the redox energy in a proton gradient. Cyanobacterial NDH-1 also plays a role in inorganic carbon-concentration. The chain is NAD(P)H-quinone oxidoreductase subunit H from Synechococcus sp. (strain CC9902).